The chain runs to 339 residues: Phenylalanine--tRNA ligase alpha subunit (339 aa).

The segment covering 1–14 (MEAKLKQLEEKAKQ) has biased composition (basic and acidic residues). The tract at residues 1 to 20 (MEAKLKQLEEKAKQDIQAST) is disordered. Residue Glu254 coordinates Mg(2+).

This sequence belongs to the class-II aminoacyl-tRNA synthetase family. Phe-tRNA synthetase alpha subunit type 1 subfamily. Tetramer of two alpha and two beta subunits. Mg(2+) is required as a cofactor.

It localises to the cytoplasm. It carries out the reaction tRNA(Phe) + L-phenylalanine + ATP = L-phenylalanyl-tRNA(Phe) + AMP + diphosphate + H(+). In Alkaliphilus metalliredigens (strain QYMF), this protein is Phenylalanine--tRNA ligase alpha subunit.